Here is a 101-residue protein sequence, read N- to C-terminus: Small ribosomal subunit protein uS14 (101 aa).

The protein belongs to the universal ribosomal protein uS14 family. Part of the 30S ribosomal subunit. Contacts proteins S3 and S10.

Its function is as follows. Binds 16S rRNA, required for the assembly of 30S particles and may also be responsible for determining the conformation of the 16S rRNA at the A site. The sequence is that of Small ribosomal subunit protein uS14 from Beijerinckia indica subsp. indica (strain ATCC 9039 / DSM 1715 / NCIMB 8712).